The primary structure comprises 227 residues: Iron-regulated surface determinant protein C (227 aa).

A signal peptide spans 1 to 28; it reads MKNILKVFNTTILALIIIIATFSNSANA. The region spanning 29–150 is the NEAT domain; it reads ADSGTLNYEV…KFNGPTDVAG (122 aa). Residues Ser47, Ile48, Tyr132, and Tyr136 each contribute to the heme site. Residues 149–191 form a disordered region; sequence AGANAPGKDDKNSASGSDKGSDGATTGQSESNSSNKDKVENPQ. The span at 161–172 shows a compositional bias: low complexity; that stretch reads SASGSDKGSDGA. Over residues 173–182 the composition is skewed to polar residues; sequence TTGQSESNSS. Residues 189–193 carry the NPQTN sorting signal motif; that stretch reads NPQTN. Residue Thr192 is modified to Pentaglycyl murein peptidoglycan amidated threonine. Positions 193–227 are cleaved as a propeptide — removed by sortase B; it reads NAGTPAYIYAIPVASLALLIAITLFVRKKSKGNVE.

This sequence belongs to the IsdC family. As to quaternary structure, monomer. Interacts with IsdA.

Its subcellular location is the secreted. It is found in the cell wall. Its function is as follows. Involved in heme (porphyrin) scavenging. Binds hemoglobin and almost exclusively free-base protoporphyrin IX. Probably has a role as the central conduit of the isd heme uptake system, i.e. mediates the transfer of the iron-containing nutrient from IsdABH to the membrane translocation system IsdDEF. Hemin-free IsdC (apo-IsdC) acquires hemin from hemin-containing IsdA (holo-IsdA) probably through the activated holo-IsdA-apo-IsdC complex and due to the higher affinity of apo-IsdC for the cofactor. The reaction is reversible. The polypeptide is Iron-regulated surface determinant protein C (isdC) (Staphylococcus aureus (strain bovine RF122 / ET3-1)).